Consider the following 804-residue polypeptide: Phenylalanine--tRNA ligase beta subunit (804 aa).

The 111-residue stretch at 38–148 (RSSLKGFVIA…EDAPIGGLFA (111 aa)) folds into the tRNA-binding domain. Positions 401-476 (PEIKQIAFPF…RIYGLDKIEP (76 aa)) constitute a B5 domain. Residues aspartate 454, aspartate 460, glutamate 463, and glutamate 464 each contribute to the Mg(2+) site. The FDX-ACB domain occupies 710–803 (SPFQMVRRDF…VTKATGAYLR (94 aa)).

The protein belongs to the phenylalanyl-tRNA synthetase beta subunit family. Type 1 subfamily. Tetramer of two alpha and two beta subunits. Mg(2+) is required as a cofactor.

It is found in the cytoplasm. It carries out the reaction tRNA(Phe) + L-phenylalanine + ATP = L-phenylalanyl-tRNA(Phe) + AMP + diphosphate + H(+). The polypeptide is Phenylalanine--tRNA ligase beta subunit (Bartonella quintana (strain Toulouse) (Rochalimaea quintana)).